The following is a 216-amino-acid chain: MKQDSRFPNLFITDHPLIQHKLTHMRDKDTSTRTFRELLREITLLMGYEITRNLPITTKRVETPLVEVDAPVIAGKKLAIVPVLRAGIGMSDGLLDLVPSARVGHIGVYRADDHRPVEYLVRLPDLEDRIFILCDPMVATGYSAVHAVDVLKRRNVPAANIMFVALVAAPEGVQVFQDAHPDVKLFVASLDSHLNEHAYIVPGLGDAGDRLFGTKN.

5-phospho-alpha-D-ribose 1-diphosphate-binding positions include Arg-85, Arg-110, and 135 to 143; that span reads DPMVATGYS. Uracil contacts are provided by residues Ile-200 and 205-207; that span reads GDA. Asp-206 contacts 5-phospho-alpha-D-ribose 1-diphosphate.

The protein belongs to the UPRTase family. The cofactor is Mg(2+).

It catalyses the reaction UMP + diphosphate = 5-phospho-alpha-D-ribose 1-diphosphate + uracil. Its pathway is pyrimidine metabolism; UMP biosynthesis via salvage pathway; UMP from uracil: step 1/1. Its activity is regulated as follows. Allosterically activated by GTP. In terms of biological role, catalyzes the conversion of uracil and 5-phospho-alpha-D-ribose 1-diphosphate (PRPP) to UMP and diphosphate. This is Uracil phosphoribosyltransferase from Burkholderia lata (strain ATCC 17760 / DSM 23089 / LMG 22485 / NCIMB 9086 / R18194 / 383).